The primary structure comprises 48 residues: Delta-stichotoxin-Hcr1e (48 aa).

Disulfide bonds link Cys-3-Cys-43, Cys-5-Cys-33, and Cys-26-Cys-44.

Belongs to the sea anemone sodium channel inhibitory toxin family. Type II subfamily.

It localises to the secreted. It is found in the nematocyst. Binds to site 3 of voltage-gated sodium channels and inhibits the inactivation process. In Radianthus crispa (Leathery sea anemone), this protein is Delta-stichotoxin-Hcr1e.